We begin with the raw amino-acid sequence, 967 residues long: MTTIVAPPIKSITSIDNDDNVDGVIEKSVKKPVSLTFDQIIDRFYKHILTWDASDLSPKEKELKPVKVSFNNEEDYITTYEPLLFEECRAQLERSIEEGEKDDTSEPTLSRVRYISEVNDFLVVGLVMAENVNIFQFHDNDLIMISLHHPLIVFGMDEDEEMTDDEDTAPTSAATHVGAPTKSTTTTTTTTTTTTTTTTTATTNIIDDPNKTTEDIKKKKKVIPPSKTPITEQNRTLHLIGTVEHLDNGGIKVKFYVKGIKGDRARQVSLLLRYEIDWWTTKLCNLSTLQREFAALYQCSQSNFMKTLMMRDDDGEDGIVMKIPPLLHDQFSSTYNDSQLNALTSALEGNAITLIQGPPGTGKTHVILGLISVLLHSTIVPKVKSGGNNLGDHLLKDRELSMAEKRDLWNISQPWFNKEFPHIRDNYELIDYDFEERDQKRKRDLWRKLRDTGSVKGGSTKRRILLCAPSNGAVDEIVSRLIRDGLLNADGRKYNPNLVRVGPGSHSDVESVSLDYMVRCRQQLMNSNSAIPSSSASTAAATSGSSRSTQDTSSIRTLVLDEADIVATTLSFSGASLLTKMAGGFDIVIIDEAAQAVETSTLIPIQHGCKKVVLVGDPKQLPATIISPLAIKYKYDQSLFQRLQEKNSPHMLTTQYRMHSLIRAFPSRHFYQDLLLDGPNIPSRATHYHSNPFFGPLVFYDLSWSTETKPGGGSVFNEHECKMAMYLFQLFTKVYPDEDFASRIGIISPYRQQVLALREIFKNYPGISIDTVDGFQGREREIIIFSCVRAPVEEGAGIGFLSDVRRMNVALTRPRSSLLILGNTKALSINKDWNELIQHTQNNQQLIPVTKDQPLEIIIPTFTTRELFTELSEKGQQIVIPKPRTEEEINLQKQKDIEKRKKQHKRQKQKSKENDKKKQLKKRKELNNNDNNNNNKESSNKEVQEITNAEVVKDTEINNTKRARTRR.

Residues 161–192 (EMTDDEDTAPTSAATHVGAPTKSTTTTTTTTT) form a disordered region. 357 to 364 (GPPGTGKT) serves as a coordination point for ATP. Disordered stretches follow at residues 529 to 553 (SAIP…QDTS) and 892 to 967 (QKQK…RTRR). Positions 890 to 949 (NLQKQKDIEKRKKQHKRQKQKSKENDKKKQLKKRKELNNNDNNNNNKESSNKEVQEITNA) form a coiled coil. The segment covering 900 to 909 (RKKQHKRQKQ) has biased composition (basic residues). Residues 928–937 (NNDNNNNNKE) are compositionally biased toward low complexity.

The protein belongs to the DNA2/NAM7 helicase family.

Its subcellular location is the nucleus. The protein is Probable helicase DDB_G0274399 of Dictyostelium discoideum (Social amoeba).